A 291-amino-acid chain; its full sequence is 4-diphosphocytidyl-2-C-methyl-D-erythritol kinase (291 aa).

Residue lysine 10 is part of the active site. Residue 100 to 110 (PIGGGLGGGSS) coordinates ATP. Aspartate 142 is a catalytic residue.

Belongs to the GHMP kinase family. IspE subfamily. Homodimer.

It carries out the reaction 4-CDP-2-C-methyl-D-erythritol + ATP = 4-CDP-2-C-methyl-D-erythritol 2-phosphate + ADP + H(+). It functions in the pathway isoprenoid biosynthesis; isopentenyl diphosphate biosynthesis via DXP pathway; isopentenyl diphosphate from 1-deoxy-D-xylulose 5-phosphate: step 3/6. Its function is as follows. Catalyzes the phosphorylation of the position 2 hydroxy group of 4-diphosphocytidyl-2C-methyl-D-erythritol. In Hamiltonella defensa subsp. Acyrthosiphon pisum (strain 5AT), this protein is 4-diphosphocytidyl-2-C-methyl-D-erythritol kinase.